The following is a 126-amino-acid chain: uncharacterized protein (126 aa).

In terms of domain architecture, VOC spans 4–126; that stretch reads RIDHTGIMVR…DGEWIEFFQR (123 aa). His-7, Glu-42, His-74, and Glu-122 together coordinate a divalent metal cation.

It belongs to the glyoxalase I family.

This is an uncharacterized protein from Bacillus subtilis (strain 168).